A 651-amino-acid polypeptide reads, in one-letter code: Coiled-coil domain-containing protein 81 (651 aa).

Positions 194–314 (LSSRESFGKR…PKTSPAPACQ (121 aa)) are disordered. At Ser206 the chain carries Phosphoserine. Basic and acidic residues-rich tracts occupy residues 212 to 222 (RIEHKETENKP) and 232 to 250 (GENRPRKSKLKDQSDKEEG). Residues 265–275 (SISPAKVTSGS) show a composition bias toward polar residues. Ser273, Ser275, Ser294, and Ser416 each carry phosphoserine. Coiled coils occupy residues 428–465 (SQSLLKQMESKREKEIKQRQNRELMDRLEQVQLTEELA) and 539–566 (KRNTILNQLVDQRRDLQMLQRTKREHLA).

It is found in the cytoplasm. The protein resides in the cytoskeleton. It localises to the microtubule organizing center. The protein localises to the centrosome. The sequence is that of Coiled-coil domain-containing protein 81 (Ccdc81) from Rattus norvegicus (Rat).